We begin with the raw amino-acid sequence, 210 residues long: Proline-rich protein 20G (210 aa).

Over residues 1–11 the composition is skewed to basic residues; the sequence is MEEPRHSKRPR. Residues 1-82 form a disordered region; sequence MEEPRHSKRP…GGSWRAGRGR (82 aa). A compositionally biased stretch (gly residues) spans 69–82; the sequence is GQRGGGSWRAGRGR.

This sequence belongs to the PRR20 family.

The chain is Proline-rich protein 20G from Homo sapiens (Human).